The chain runs to 310 residues: Ribosomal RNA small subunit methyltransferase H (310 aa).

Residues 32 to 34, aspartate 52, phenylalanine 79, aspartate 100, and glutamine 107 contribute to the S-adenosyl-L-methionine site; that span reads GGH.

The protein belongs to the methyltransferase superfamily. RsmH family.

Its subcellular location is the cytoplasm. It catalyses the reaction cytidine(1402) in 16S rRNA + S-adenosyl-L-methionine = N(4)-methylcytidine(1402) in 16S rRNA + S-adenosyl-L-homocysteine + H(+). Its function is as follows. Specifically methylates the N4 position of cytidine in position 1402 (C1402) of 16S rRNA. The sequence is that of Ribosomal RNA small subunit methyltransferase H from Bacillus cereus (strain B4264).